The primary structure comprises 694 residues: Cyclic nucleotide-gated channel alpha-3 (694 aa).

2 stretches are compositionally biased toward polar residues: residues 1 to 11 (MAKINTQYSHP) and 112 to 123 (SQESNAQANVGS). 2 disordered regions span residues 1 to 24 (MAKI…SDRD) and 109 to 152 (EVSS…EEKK). Residues 1–170 (MAKINTQYSH…VDPSSNLYYR (170 aa)) are Cytoplasmic-facing. The chain crosses the membrane as a helical span at residues 171-192 (WLTAIALPVFYNWYLLICRACF). The Extracellular segment spans residues 193-198 (DELQSE). The chain crosses the membrane as a helical span at residues 199–219 (YLMLWLVLDYSADVLYVLDVL). At 220-246 (VRARTGFLEQGLMVSDTNRLWQHYKTT) the chain is on the cytoplasmic side. A helical transmembrane segment spans residues 247 to 266 (TQFKLDVLSLVPTDLAYLKV). The Extracellular portion of the chain corresponds to 267 to 270 (GTNY). The helical transmembrane segment at 271-288 (PEVRFNRLLKFSRLFEFF) threads the bilayer. The Cytoplasmic segment spans residues 289 to 298 (DRTETRTNYP). The ion conduction pathway stretch occupies residues 298–406 (PNMFRIGNLV…GNVGSMISNM (109 aa)). The chain crosses the membrane as a helical span at residues 299–321 (NMFRIGNLVLYILIIIHWNACIY). The Extracellular portion of the chain corresponds to 322 to 347 (FAISKFIGFGTDSWVYPNISIPEHGR). The N-linked (GalNAc...) asparagine glycan is linked to Asn339. 2 helical membrane-spanning segments follow: residues 348–378 (LSRK…DEEY) and 379–403 (LFVV…GSMI). Residues 365 to 368 (TIGE) form a selectivity filter region. At 404–694 (SNMNASRAEF…DATKTEDKQQ (291 aa)) the chain is on the cytoplasmic side. The C-linker stretch occupies residues 408–485 (ASRAEFQAKI…TLKKVRIFQD (78 aa)). Residues 488 to 608 (AGLLVELVLK…EEKGRQILMK (121 aa)) form a cyclic nucleotide-binding domain region. Positions 548, 549, 551, 564, 565, and 609 each coordinate 3',5'-cyclic GMP. A coiled-coil region spans residues 626–669 (LEEKVEQLGSSLDTLQTRFARLLAEYNATQMKMKQRLSQLESQV). A disordered region spans residues 662–694 (LSQLESQVKGGGDKPLADGEVPGDATKTEDKQQ).

The protein belongs to the cyclic nucleotide-gated cation channel (TC 1.A.1.5) family. CNGA3 subfamily. Forms heterotetrameric channels composed of CNGA3 and CNGB3 subunits with 3:1 stoichiometry. In terms of tissue distribution, prominently expressed in retina.

It is found in the cell membrane. It carries out the reaction Ca(2+)(in) = Ca(2+)(out). It catalyses the reaction Na(+)(in) = Na(+)(out). The enzyme catalyses K(+)(in) = K(+)(out). The catalysed reaction is NH4(+)(in) = NH4(+)(out). It carries out the reaction Rb(+)(in) = Rb(+)(out). It catalyses the reaction Li(+)(in) = Li(+)(out). The enzyme catalyses Cs(+)(in) = Cs(+)(out). With respect to regulation, inhibited by L-cis-diltiazem. In terms of biological role, pore-forming subunit of the cone cyclic nucleotide-gated channel. Mediates cone photoresponses at bright light converting transient changes in intracellular cGMP levels into electrical signals. In the dark, cGMP levels are high and keep the channel open enabling a steady inward current carried by Na(+) and Ca(2+) ions that leads to membrane depolarization and neurotransmitter release from synaptic terminals. Upon photon absorption cGMP levels decline leading to channel closure and membrane hyperpolarization that ultimately slows neurotransmitter release and signals the presence of light, the end point of the phototransduction cascade. Pore-forming subunit of the gustatory cyclic nucleotide-gated channel. In the taste buds, may sense oral extracellular pH and conduct ion currents that modulate the excitability of taste cells. Conducts cGMP- and cAMP-gated ion currents, with permeability for monovalent and divalent cations. The polypeptide is Cyclic nucleotide-gated channel alpha-3 (Homo sapiens (Human)).